Consider the following 876-residue polypeptide: Alanine--tRNA ligase (876 aa).

Zn(2+) contacts are provided by histidine 565, histidine 569, cysteine 667, and histidine 671.

Belongs to the class-II aminoacyl-tRNA synthetase family. The cofactor is Zn(2+).

It is found in the cytoplasm. The enzyme catalyses tRNA(Ala) + L-alanine + ATP = L-alanyl-tRNA(Ala) + AMP + diphosphate. Its function is as follows. Catalyzes the attachment of alanine to tRNA(Ala) in a two-step reaction: alanine is first activated by ATP to form Ala-AMP and then transferred to the acceptor end of tRNA(Ala). Also edits incorrectly charged Ser-tRNA(Ala) and Gly-tRNA(Ala) via its editing domain. The chain is Alanine--tRNA ligase from Desulfosudis oleivorans (strain DSM 6200 / JCM 39069 / Hxd3) (Desulfococcus oleovorans).